The chain runs to 424 residues: Gamma-glutamyl phosphate reductase (424 aa).

The interval 1–27 (MSVEAQSRSGAVDTQEPADLREQVHSA) is disordered.

The protein belongs to the gamma-glutamyl phosphate reductase family.

It is found in the cytoplasm. It catalyses the reaction L-glutamate 5-semialdehyde + phosphate + NADP(+) = L-glutamyl 5-phosphate + NADPH + H(+). It participates in amino-acid biosynthesis; L-proline biosynthesis; L-glutamate 5-semialdehyde from L-glutamate: step 2/2. Catalyzes the NADPH-dependent reduction of L-glutamate 5-phosphate into L-glutamate 5-semialdehyde and phosphate. The product spontaneously undergoes cyclization to form 1-pyrroline-5-carboxylate. This chain is Gamma-glutamyl phosphate reductase, found in Mycolicibacterium smegmatis (strain ATCC 700084 / mc(2)155) (Mycobacterium smegmatis).